The primary structure comprises 615 residues: Angiotensin-converting enzyme (615 aa).

The N-terminal stretch at 1-17 (MRLFLLALLATLAVTQA) is a signal peptide. The Peptidase M2 domain occupies 19 to 607 (VKEEIQAKEY…IKNNVHIGWT (589 aa)). N53 is a glycosylation site (N-linked (GlcNAc...) asparagine). An intrachain disulfide couples C133 to C141. N-linked (GlcNAc...) asparagine glycans are attached at residues N196 and N311. A disulfide bridge connects residues C336 and C354. H367 provides a ligand contact to Zn(2+). E368 acts as the Proton acceptor in catalysis. Zn(2+)-binding residues include H371 and E395. H497 acts as the Proton donor in catalysis. A disulfide bridge links C522 with C540.

This sequence belongs to the peptidase M2 family. It depends on Zn(2+) as a cofactor. Glycosylated. Expressed in vesicular structures in spermatocytes and early spermatids (at protein level).

Its subcellular location is the secreted. It localises to the extracellular space. It catalyses the reaction Release of a C-terminal dipeptide, oligopeptide-|-Xaa-Yaa, when Xaa is not Pro, and Yaa is neither Asp nor Glu. Thus, conversion of angiotensin I to angiotensin II, with increase in vasoconstrictor activity, but no action on angiotensin II.. Inhibited by captopril and, to a lesser extent, by lisinopril, trandolaprilat, fosinoprilat and enalaprilat. In terms of biological role, may be involved in the specific maturation or degradation of a number of bioactive peptides. May play a role in the contractions of the heart, gut and testes, and in spermatid differentiation. This Drosophila melanogaster (Fruit fly) protein is Angiotensin-converting enzyme (Ance).